A 225-amino-acid polypeptide reads, in one-letter code: MNWVIIAALFFVIINKLLQYTSRYQEAWINKFSISSDISSLSKEYSKLSAERLKIKEENQSISAQDNYARWTKNNRKLTKLEGELEKLRSNLKIAKDSQSKLFNRLKLLTLTLPFMILKLWKGKFIVYDIPTKDTFPVIVNGVLSQGLLYIPLLPINFLRGIDPNKHILVPGVSLGIWLMALTKTIDTVEFIVKQLVFQPVVSKQVKEKTKEKVVELKTTEAELD.

A topological domain (lumenal) is located at residue Met1. The chain crosses the membrane as a helical span at residues Asn2 to Thr21. Residues Ser22–Lys107 are Cytoplasmic-facing. Residues Asp37 to Asn104 are a coiled coil. Residues Leu108 to Tyr128 traverse the membrane as a helical segment. Over Asp129–Gly172 the chain is Lumenal. A helical membrane pass occupies residues Val173–Val189. Residues Glu190–Asp225 are Cytoplasmic-facing.

It belongs to the WRB/GET1 family. As to quaternary structure, component of the Golgi to ER traffic (GET) complex, which is composed of GET1, GET2 and GET3. Within the complex, GET1 and GET2 form a heterotetramer which is stabilized by phosphatidylinositol binding and which binds to the GET3 homodimer.

Its subcellular location is the endoplasmic reticulum membrane. It is found in the golgi apparatus membrane. Its function is as follows. Required for the post-translational delivery of tail-anchored (TA) proteins to the endoplasmic reticulum. Together with GET2, acts as a membrane receptor for soluble GET3, which recognizes and selectively binds the transmembrane domain of TA proteins in the cytosol. The GET complex cooperates with the HDEL receptor ERD2 to mediate the ATP-dependent retrieval of resident ER proteins that contain a C-terminal H-D-E-L retention signal from the Golgi to the ER. The chain is Golgi to ER traffic protein 1 from Vanderwaltozyma polyspora (strain ATCC 22028 / DSM 70294 / BCRC 21397 / CBS 2163 / NBRC 10782 / NRRL Y-8283 / UCD 57-17) (Kluyveromyces polysporus).